The chain runs to 362 residues: N5-carboxyaminoimidazole ribonucleotide synthase (362 aa).

ATP-binding positions include Arg108, Lys148, 153–159 (GYDGKGQ), 185–188 (EGFV), Glu193, His216, and 270–271 (NE). Positions 112–300 (KQFLNESGIE…QFEQHIRAVA (189 aa)) constitute an ATP-grasp domain.

It belongs to the PurK/PurT family. Homodimer.

The enzyme catalyses 5-amino-1-(5-phospho-beta-D-ribosyl)imidazole + hydrogencarbonate + ATP = 5-carboxyamino-1-(5-phospho-D-ribosyl)imidazole + ADP + phosphate + 2 H(+). It functions in the pathway purine metabolism; IMP biosynthesis via de novo pathway; 5-amino-1-(5-phospho-D-ribosyl)imidazole-4-carboxylate from 5-amino-1-(5-phospho-D-ribosyl)imidazole (N5-CAIR route): step 1/2. Functionally, catalyzes the ATP-dependent conversion of 5-aminoimidazole ribonucleotide (AIR) and HCO(3)(-) to N5-carboxyaminoimidazole ribonucleotide (N5-CAIR). The chain is N5-carboxyaminoimidazole ribonucleotide synthase from Brucella melitensis biotype 1 (strain ATCC 23456 / CCUG 17765 / NCTC 10094 / 16M).